Here is a 274-residue protein sequence, read N- to C-terminus: tRNA-cytidine(32) 2-sulfurtransferase (274 aa).

A PP-loop motif motif is present at residues 40–45 (SGGKDS). Residues cysteine 115, cysteine 118, and cysteine 206 each coordinate [4Fe-4S] cluster.

Belongs to the TtcA family. In terms of assembly, homodimer. Mg(2+) serves as cofactor. It depends on [4Fe-4S] cluster as a cofactor.

It is found in the cytoplasm. The enzyme catalyses cytidine(32) in tRNA + S-sulfanyl-L-cysteinyl-[cysteine desulfurase] + AH2 + ATP = 2-thiocytidine(32) in tRNA + L-cysteinyl-[cysteine desulfurase] + A + AMP + diphosphate + H(+). Its pathway is tRNA modification. Its function is as follows. Catalyzes the ATP-dependent 2-thiolation of cytidine in position 32 of tRNA, to form 2-thiocytidine (s(2)C32). The sulfur atoms are provided by the cysteine/cysteine desulfurase (IscS) system. The chain is tRNA-cytidine(32) 2-sulfurtransferase from Pseudomonas putida (strain ATCC 700007 / DSM 6899 / JCM 31910 / BCRC 17059 / LMG 24140 / F1).